Reading from the N-terminus, the 122-residue chain is Acidic phospholipase A2 Tpu-E6c (122 aa).

Intrachain disulfides connect C26–C115, C28–C44, C43–C95, C49–C122, C50–C88, C57–C81, and C75–C86. Residues Y27, G29, and G31 each contribute to the Ca(2+) site. The active site involves H47. Residue D48 coordinates Ca(2+). D89 is an active-site residue.

In terms of assembly, monomer. It depends on Ca(2+) as a cofactor. In terms of tissue distribution, expressed by the venom gland.

Its subcellular location is the secreted. It carries out the reaction a 1,2-diacyl-sn-glycero-3-phosphocholine + H2O = a 1-acyl-sn-glycero-3-phosphocholine + a fatty acid + H(+). Functionally, snake venom phospholipase A2 (PLA2) that impairs hemostasis. It weakly inhibits ADP-induced platelet aggregation when tested on platelet rich plasma from human and rabbit blood (15-25% of inhibition at 5-10 ug of enzyme), and dose-dependently inhibits blood coagulation, possibly by inhibiting thrombin activation. Exhibits high hydrolytic activities toward L-dipalmitoyl phosphatidylcholine. PLA2 catalyzes the calcium-dependent hydrolysis of the 2-acyl groups in 3-sn-phosphoglycerides. The protein is Acidic phospholipase A2 Tpu-E6c of Craspedocephalus puniceus (Flat-nosed pitviper).